Here is a 364-residue protein sequence, read N- to C-terminus: MAQQTPLYEQHTLCGARMVDFHGWMMPLHYGSQLDEHHAVRTDAGMFDVSHMTIVDLHGSRTREFLRYLLANDVAKLTKTGKALYSGMLNASGGVIDDLIVYYFTEDFFRLVVNSATREKDLSWITQHAEPYAIDITVRDDLSLIAVQGPNAQEKAATLFTDQQRHAVEGMKPFFGVQAGDLFIATTGYTGEAGYEIAMPNEKAADFWRALVEAGVKPCGLGARDTLRLEAGMNLYGQEMDEGISPLAANMGWTIAWEPADRDFIGREALEMQREKGHEQLVGLVMTEKGVLRNELPVRFTDAQGNQQEGIITSGTFSPTLGYSIALARVPAGIGETAIVQIRNREMPVKVTKPVFVRNGKAVA.

It belongs to the GcvT family. In terms of assembly, the glycine cleavage system is composed of four proteins: P, T, L and H.

The catalysed reaction is N(6)-[(R)-S(8)-aminomethyldihydrolipoyl]-L-lysyl-[protein] + (6S)-5,6,7,8-tetrahydrofolate = N(6)-[(R)-dihydrolipoyl]-L-lysyl-[protein] + (6R)-5,10-methylene-5,6,7,8-tetrahydrofolate + NH4(+). Its function is as follows. The glycine cleavage system catalyzes the degradation of glycine. This chain is Aminomethyltransferase, found in Salmonella paratyphi A (strain AKU_12601).